A 250-amino-acid chain; its full sequence is Agamous-like MADS-box protein AGL8 homolog (250 aa).

The 55-residue stretch at 3-57 (RGRVQLKRIENKINRQVTFSKRRSGLLKKAHEISVLCDAEVGLIVFSTKGKLFEY) folds into the MADS-box domain. Residues 88–178 (PGSWTLENAK…SKKVKEREKE (91 aa)) enclose the K-box domain. Disordered stretches follow at residues 162 to 191 (QEQNNQLSKKVKEREKEVEQQNQWDQQNHE) and 206 to 241 (PHLGEASQNTNVVDNGEVEGGNSSQXQGAANNTVMP). Positions 171–180 (KVKEREKEVE) are enriched in basic and acidic residues. 2 stretches are compositionally biased toward polar residues: residues 181 to 191 (QQNQWDQQNHE) and 226 to 240 (GNSSQXQGAANNTVM).

It is found in the nucleus. Functionally, probable transcription factor. In Solanum commersonii (Commerson's wild potato), this protein is Agamous-like MADS-box protein AGL8 homolog (SCM1).